We begin with the raw amino-acid sequence, 281 residues long: Probable endonuclease 4 (281 aa).

9 residues coordinate Zn(2+): histidine 69, histidine 109, glutamate 145, aspartate 179, histidine 182, histidine 216, aspartate 229, histidine 231, and glutamate 261.

Belongs to the AP endonuclease 2 family. Requires Zn(2+) as cofactor.

It carries out the reaction Endonucleolytic cleavage to 5'-phosphooligonucleotide end-products.. Its function is as follows. Endonuclease IV plays a role in DNA repair. It cleaves phosphodiester bonds at apurinic or apyrimidinic (AP) sites, generating a 3'-hydroxyl group and a 5'-terminal sugar phosphate. The sequence is that of Probable endonuclease 4 from Glaesserella parasuis serovar 5 (strain SH0165) (Haemophilus parasuis).